We begin with the raw amino-acid sequence, 237 residues long: 1-(5-phosphoribosyl)-5-[(5-phosphoribosylamino)methylideneamino] imidazole-4-carboxamide isomerase (237 aa).

Asp8 serves as the catalytic Proton acceptor. The Proton donor role is filled by Asp129.

This sequence belongs to the HisA/HisF family.

The protein resides in the cytoplasm. The enzyme catalyses 1-(5-phospho-beta-D-ribosyl)-5-[(5-phospho-beta-D-ribosylamino)methylideneamino]imidazole-4-carboxamide = 5-[(5-phospho-1-deoxy-D-ribulos-1-ylimino)methylamino]-1-(5-phospho-beta-D-ribosyl)imidazole-4-carboxamide. It functions in the pathway amino-acid biosynthesis; L-histidine biosynthesis; L-histidine from 5-phospho-alpha-D-ribose 1-diphosphate: step 4/9. This Roseiflexus castenholzii (strain DSM 13941 / HLO8) protein is 1-(5-phosphoribosyl)-5-[(5-phosphoribosylamino)methylideneamino] imidazole-4-carboxamide isomerase.